The chain runs to 345 residues: Serpentine receptor class beta-13 (345 aa).

Residues 1–22 (MAGINQTKCDLGFQITFNTVYR) lie on the Extracellular side of the membrane. The N-linked (GlcNAc...) asparagine glycan is linked to Asn5. The chain crosses the membrane as a helical span at residues 23-43 (FSQFYTFSVSSFAVPGLIYFM). At 44-58 (FKRLFQLYFHGNLKT) the chain is on the cytoplasmic side. The chain crosses the membrane as a helical span at residues 59–79 (LLIAYFISILLYAVMLCFAFG). Over 80 to 103 (YQFFVPFFIKSNCDLIINKTLFKY) the chain is Extracellular. N-linked (GlcNAc...) asparagine glycosylation occurs at Asn97. The chain crosses the membrane as a helical span at residues 104-124 (IHTSVIFLLTTPMMFPLGFSI). Residues 125-142 (ERFTAMAMASRYENIRTL) are Cytoplasmic-facing. The helical transmembrane segment at 143–163 (IGPVLVIFLIIPNCIIFYFLF) threads the bilayer. The Extracellular portion of the chain corresponds to 164 to 189 (QHETYDDTFISFLMLPNTTAVNFNTY). Asn180 is a glycosylation site (N-linked (GlcNAc...) asparagine). A helical membrane pass occupies residues 190-210 (LWFLLYLNIGNLALNVLLLLV). At 211 to 241 (HRKFKRRLLLHKTSLSTRYAIEEISQSSKFT) the chain is on the cytoplasmic side. Residues 242-262 (LIITFTHLLFFGCNTICSILV) form a helical membrane-spanning segment. The Extracellular segment spans residues 263–280 (RVLGEPFFGSFINHSVAR). A glycan (N-linked (GlcNAc...) asparagine) is linked at Asn275. Residues 281 to 301 (GVNCAVPTYNLVIVVVGFVSL) form a helical membrane-spanning segment. The Cytoplasmic portion of the chain corresponds to 302–345 (SKLNSRRQQEVQTTVQLKTTGKEGARNYDNITANQWATITQIGF).

It belongs to the nematode receptor-like protein srb family. Expressed in the head sensory neurons ASI, ASK and AWB. Not expressed in male somatic gonads or sperm.

It is found in the cell membrane. The protein resides in the perikaryon. Its subcellular location is the cell projection. It localises to the dendrite. Functionally, G-protein coupled receptor that antagonizes the negative effects of the gcy-35 oxygen sensor on spermatogenesis. This leads to the maintenance of mitochondrial function in developing spermatocytes and/or spermatids prior to testis maturation during the early larval stages. Regulates the navigational capacity of sperm during hyperoxic conditions ensuring the proper targeting of sperm derived from males to the fertilization site in the uterus of hermaphrodites. May act in the same signaling pathway as the neuropeptide flp-21. This is Serpentine receptor class beta-13 from Caenorhabditis elegans.